Here is a 396-residue protein sequence, read N- to C-terminus: Calcium-binding and spermatid-specific protein 1 (396 aa).

A disordered region spans residues 1-21 (MAEDGLPKIYSHPPTESSKTP). Residue S274 is modified to Phosphoserine. Residues 276 to 296 (EKDKDNQEDTLLTDEESPEGA) form a disordered region. The span at 283–293 (EDTLLTDEESP) shows a compositional bias: acidic residues. T288 is subject to Phosphothreonine; by CK2. S320 and S377 each carry phosphoserine. The interval 336 to 396 (EDSSTEEELS…LKEEPDEFMI (61 aa)) is disordered.

It localises to the cytoplasm. The protein resides in the mitochondrion inner membrane. The protein localises to the cell projection. It is found in the cilium. Its subcellular location is the flagellum. It localises to the cytoplasmic vesicle. The protein resides in the secretory vesicle. The protein localises to the acrosome. Functionally, calcium-binding protein. Essential for maintaining the structural integrity of the sperm flagella. The sequence is that of Calcium-binding and spermatid-specific protein 1 (CABS1) from Macaca fascicularis (Crab-eating macaque).